Here is a 266-residue protein sequence, read N- to C-terminus: Thiazole synthase (266 aa).

Catalysis depends on Lys110, which acts as the Schiff-base intermediate with DXP. 1-deoxy-D-xylulose 5-phosphate-binding positions include Gly171, 197–198 (AG), and 219–220 (AT).

Belongs to the ThiG family. As to quaternary structure, homotetramer. Forms heterodimers with either ThiH or ThiS.

The protein resides in the cytoplasm. It carries out the reaction [ThiS sulfur-carrier protein]-C-terminal-Gly-aminoethanethioate + 2-iminoacetate + 1-deoxy-D-xylulose 5-phosphate = [ThiS sulfur-carrier protein]-C-terminal Gly-Gly + 2-[(2R,5Z)-2-carboxy-4-methylthiazol-5(2H)-ylidene]ethyl phosphate + 2 H2O + H(+). It participates in cofactor biosynthesis; thiamine diphosphate biosynthesis. Its function is as follows. Catalyzes the rearrangement of 1-deoxy-D-xylulose 5-phosphate (DXP) to produce the thiazole phosphate moiety of thiamine. Sulfur is provided by the thiocarboxylate moiety of the carrier protein ThiS. In vitro, sulfur can be provided by H(2)S. This is Thiazole synthase from Thermobifida fusca (strain YX).